The following is a 289-amino-acid chain: MSTTFQLDTSTSRANPTPAPMKRLTIPAIRQRKKDGVTAQPVVMLTAYTARQAQLLDAHCDLLLVGDSLGQVIYGLPSSVPVTLDMMAAHGAAVVRGSYHAAVVVDMPFGSYEASPQQAFESASRLLKETGCAAVKLEGGEAMAETVAFLTNRGIPVMGHVGLTPQAVNVLGGYNARGRSEAEAAKIVGDARSLADAGAFAIVIEGVVEPIAIAITQAVACPTIGIGASAQCDGQVLVTEDMLGMFERVPRFVKIYEDLAGTISGAAARYADEVRARTFPGIEQTYQPK.

The span at 1–15 (MSTTFQLDTSTSRAN) shows a compositional bias: polar residues. Positions 1–20 (MSTTFQLDTSTSRANPTPAP) are disordered. 2 residues coordinate Mg(2+): Asp-67 and Asp-106. 3-methyl-2-oxobutanoate-binding positions include 67–68 (DS), Asp-106, and Lys-136. Glu-138 contributes to the Mg(2+) binding site. Glu-205 serves as the catalytic Proton acceptor.

The protein belongs to the PanB family. In terms of assembly, homodecamer; pentamer of dimers. The cofactor is Mg(2+).

It is found in the cytoplasm. The catalysed reaction is 3-methyl-2-oxobutanoate + (6R)-5,10-methylene-5,6,7,8-tetrahydrofolate + H2O = 2-dehydropantoate + (6S)-5,6,7,8-tetrahydrofolate. It participates in cofactor biosynthesis; (R)-pantothenate biosynthesis; (R)-pantoate from 3-methyl-2-oxobutanoate: step 1/2. Functionally, catalyzes the reversible reaction in which hydroxymethyl group from 5,10-methylenetetrahydrofolate is transferred onto alpha-ketoisovalerate to form ketopantoate. This Novosphingobium aromaticivorans (strain ATCC 700278 / DSM 12444 / CCUG 56034 / CIP 105152 / NBRC 16084 / F199) protein is 3-methyl-2-oxobutanoate hydroxymethyltransferase.